We begin with the raw amino-acid sequence, 695 residues long: Methionine synthase reductase (695 aa).

Residues 4-147 (FLLLYATQRG…VVEPWINGLW (144 aa)) form the Flavodoxin-like domain. Residues 10-14 (TQRGQ) and 93-124 (LLGL…QRFY) contribute to the FMN site. Positions 166 to 245 (TLTMASHASR…ASLNIPSLPP (80 aa)) are hinge. Phosphoserine is present on residues Ser-171 and Ser-187. An FAD-binding FR-type domain is found at 269 to 531 (DPVFHVPVSK…PRTTNSFHLP (263 aa)). Lys-289 is a binding site for NADP(+). Residues 449–452 (RPYS) and 485–488 (GVCT) each bind FAD. Residues 608-609 (SR), 622-624 (YVQ), and Asp-657 contribute to the NADP(+) site. Trp-695 is a binding site for FAD.

Forms a multiprotein complex with MMACHC, MMADHC and MTR. The cofactor is FAD. FMN serves as cofactor.

The protein localises to the cytoplasm. The enzyme catalyses 2 methylcob(III)alamin-[methionine synthase] + 2 S-adenosyl-L-homocysteine + NADP(+) + H(+) = 2 cob(II)alamin-[methionine synthase] + 2 S-adenosyl-L-methionine + NADPH. The catalysed reaction is 2 cob(II)alamin + A + 2 H2O + 2 H(+) = 2 aquacob(III)alamin + AH2. Key enzyme in methionine and folate homeostasis responsible for the reactivation of methionine synthase (MTR/MS) activity by catalyzing the reductive methylation of MTR-bound cob(II)alamin. Cobalamin (vitamin B12) forms a complex with MTR to serve as an intermediary in methyl transfer reactions that cycles between MTR-bound methylcob(III)alamin and MTR bound-cob(I)alamin forms, and occasional oxidative escape of the cob(I)alamin intermediate during the catalytic cycle leads to the inactive cob(II)alamin species. The processing of cobalamin in the cytosol occurs in a multiprotein complex composed of at least MMACHC, MMADHC, MTRR and MTR which may contribute to shuttle safely and efficiently cobalamin towards MTR in order to produce methionine. Also necessary for the utilization of methyl groups from the folate cycle, thereby affecting transgenerational epigenetic inheritance. Also acts as a molecular chaperone for methionine synthase by stabilizing apoMTR and incorporating methylcob(III)alamin into apoMTR to form the holoenzyme. Also serves as an aquacob(III)alamin reductase by reducing aquacob(III)alamin to cob(II)alamin; this reduction leads to stimulation of the conversion of apoMTR and aquacob(III)alamin to MTR holoenzyme. The protein is Methionine synthase reductase (MTRR) of Bos taurus (Bovine).